A 312-amino-acid polypeptide reads, in one-letter code: Acetyl-coenzyme A carboxylase carboxyl transferase subunit alpha (312 aa).

The 251-residue stretch at E36–A286 folds into the CoA carboxyltransferase C-terminal domain.

The protein belongs to the AccA family. Acetyl-CoA carboxylase is a heterohexamer composed of biotin carboxyl carrier protein (AccB), biotin carboxylase (AccC) and two subunits each of ACCase subunit alpha (AccA) and ACCase subunit beta (AccD).

It is found in the cytoplasm. The enzyme catalyses N(6)-carboxybiotinyl-L-lysyl-[protein] + acetyl-CoA = N(6)-biotinyl-L-lysyl-[protein] + malonyl-CoA. It participates in lipid metabolism; malonyl-CoA biosynthesis; malonyl-CoA from acetyl-CoA: step 1/1. Component of the acetyl coenzyme A carboxylase (ACC) complex. First, biotin carboxylase catalyzes the carboxylation of biotin on its carrier protein (BCCP) and then the CO(2) group is transferred by the carboxyltransferase to acetyl-CoA to form malonyl-CoA. The sequence is that of Acetyl-coenzyme A carboxylase carboxyl transferase subunit alpha from Sulfurovum sp. (strain NBC37-1).